Consider the following 383-residue polypeptide: Probable disease resistance protein At4g19060 (383 aa).

The disordered stretch occupies residues 36 to 84 (YEKWSSGKQRGSSSKHGNQSTHGDSSPTRNSSGSSKKGRPKANRVETSS). Polar residues predominate over residues 41-70 (SGKQRGSSSKHGNQSTHGDSSPTRNSSGSS). 2 NB-ARC domains span residues 75–184 (PKAN…MFKH) and 207–281 (VKEK…LAKA). 121 to 128 (GKYGVGKT) serves as a coordination point for ATP.

Functionally, possible disease resistance protein. This is Probable disease resistance protein At4g19060 from Arabidopsis thaliana (Mouse-ear cress).